The chain runs to 75 residues: uncharacterized protein (75 aa).

Residues 1–23 (MADAMDLAQLREQEDRERHISNA) form a disordered region. Positions 9–20 (QLREQEDRERHI) are enriched in basic and acidic residues. A dksA C4-type zinc finger spans residues 35 to 59 (CEECDAPIPEARRRAIPGVQCCVTC).

This is an uncharacterized protein from Escherichia phage 186 (Bacteriophage 186).